A 106-amino-acid chain; its full sequence is Phosphoribosyl-ATP pyrophosphatase (106 aa).

Belongs to the PRA-PH family.

It is found in the cytoplasm. The catalysed reaction is 1-(5-phospho-beta-D-ribosyl)-ATP + H2O = 1-(5-phospho-beta-D-ribosyl)-5'-AMP + diphosphate + H(+). The protein operates within amino-acid biosynthesis; L-histidine biosynthesis; L-histidine from 5-phospho-alpha-D-ribose 1-diphosphate: step 2/9. The chain is Phosphoribosyl-ATP pyrophosphatase from Methylobacillus flagellatus (strain ATCC 51484 / DSM 6875 / VKM B-1610 / KT).